Here is a 422-residue protein sequence, read N- to C-terminus: ORC1-type DNA replication protein 13 (422 aa).

ATP contacts are provided by residues 80 to 84, Tyr-231, and Arg-243; that span reads TGKTL.

It belongs to the CDC6/cdc18 family.

Involved in regulation of DNA replication. This Haloarcula marismortui (strain ATCC 43049 / DSM 3752 / JCM 8966 / VKM B-1809) (Halobacterium marismortui) protein is ORC1-type DNA replication protein 13 (cdc6m).